A 615-amino-acid polypeptide reads, in one-letter code: 70 kDa neurofilament protein (615 aa).

The segment at 1 to 31 is disordered; sequence MSVTQKKTEISTTTTYEGESRPSSGMSGFSY. Residues 1–99 are head; that stretch reads MSVTQKKTEI…KANREREKQD (99 aa). Over residues 21–30 the composition is skewed to polar residues; sequence RPSSGMSGFS. An IF rod domain is found at 96–449; the sequence is EKQDMRDLNE…KLLEGEESRV (354 aa). A coil 1A region spans residues 100–135; sequence MRDLNERFANYIEKVRFLEAQNKKLAGELEELKSKW. The interval 136 to 145 is linker 1; sequence GKETSAIKEM. The tract at residues 146–284 is coil 1B; it reads YETELEEARK…VHAQELKELA (139 aa). Residues 285 to 303 are linker 12; sequence ALAYRDTTAENREFWRNEL. The interval 304-449 is coil 2; the sequence is AQAIRDIQQE…KLLEGEESRV (146 aa). Residues 450 to 615 form a tail region; it reads GMKQIVEQVV…ANYTQNTVYQ (166 aa). Positions 499-612 constitute an LTD domain; that stretch reads AKTTYQRTSK…EDKANYTQNT (114 aa).

This sequence belongs to the intermediate filament family.

This is 70 kDa neurofilament protein from Doryteuthis pealeii (Longfin inshore squid).